Reading from the N-terminus, the 273-residue chain is 3-methyl-2-oxobutanoate hydroxymethyltransferase (273 aa).

Mg(2+)-binding residues include Asp-53 and Asp-92. 3-methyl-2-oxobutanoate-binding positions include 53 to 54 (DS), Asp-92, and Lys-122. A Mg(2+)-binding site is contributed by Glu-124. Glu-191 acts as the Proton acceptor in catalysis.

The protein belongs to the PanB family. In terms of assembly, homodecamer; pentamer of dimers. It depends on Mg(2+) as a cofactor.

The protein resides in the cytoplasm. It carries out the reaction 3-methyl-2-oxobutanoate + (6R)-5,10-methylene-5,6,7,8-tetrahydrofolate + H2O = 2-dehydropantoate + (6S)-5,6,7,8-tetrahydrofolate. It participates in cofactor biosynthesis; (R)-pantothenate biosynthesis; (R)-pantoate from 3-methyl-2-oxobutanoate: step 1/2. In terms of biological role, catalyzes the reversible reaction in which hydroxymethyl group from 5,10-methylenetetrahydrofolate is transferred onto alpha-ketoisovalerate to form ketopantoate. The sequence is that of 3-methyl-2-oxobutanoate hydroxymethyltransferase from Phocaeicola vulgatus (strain ATCC 8482 / DSM 1447 / JCM 5826 / CCUG 4940 / NBRC 14291 / NCTC 11154) (Bacteroides vulgatus).